Reading from the N-terminus, the 369-residue chain is Protein-glutamate methylesterase/protein-glutamine glutaminase 1 (369 aa).

The 118-residue stretch at 11 to 128 (RVLIVDDSAA…DLERQEASIR (118 aa)) folds into the Response regulatory domain. At D62 the chain carries 4-aspartylphosphate. Residues 136-168 (ATETTRRRSQPEPRPLAPGPKLTADEILPARPP) are disordered. Residues 170–358 (PVPETMPVVC…LDRLAARIME (189 aa)) form the CheB-type methylesterase domain. Catalysis depends on residues S183, H209, and D305.

This sequence belongs to the CheB family. Post-translationally, phosphorylated by CheA. Phosphorylation of the N-terminal regulatory domain activates the methylesterase activity.

It localises to the cytoplasm. The enzyme catalyses [protein]-L-glutamate 5-O-methyl ester + H2O = L-glutamyl-[protein] + methanol + H(+). It carries out the reaction L-glutaminyl-[protein] + H2O = L-glutamyl-[protein] + NH4(+). Functionally, involved in chemotaxis. Part of a chemotaxis signal transduction system that modulates chemotaxis in response to various stimuli. Catalyzes the demethylation of specific methylglutamate residues introduced into the chemoreceptors (methyl-accepting chemotaxis proteins or MCP) by CheR. Also mediates the irreversible deamidation of specific glutamine residues to glutamic acid. The chain is Protein-glutamate methylesterase/protein-glutamine glutaminase 1 from Cereibacter sphaeroides (strain ATCC 17023 / DSM 158 / JCM 6121 / CCUG 31486 / LMG 2827 / NBRC 12203 / NCIMB 8253 / ATH 2.4.1.) (Rhodobacter sphaeroides).